The primary structure comprises 389 residues: Large envelope protein (389 aa).

Methionine 1 bears the N-acetylmethionine mark. A lipid anchor (N-myristoyl glycine; by host) is attached at glycine 2. Positions 2–108 (GQNLSTSNPL…PPLRNTHPQA (107 aa)) are pre-S1. The interval 2–163 (GQNLSTSNPL…FSRIGDPALN (162 aa)) is pre-S. Residues 2-170 (GQNLSTSNPL…ALNMENITSG (169 aa)) are Virion surface; in external conformation-facing. The Intravirion; in internal conformation portion of the chain corresponds to 2–242 (GQNLSTSNPL…PGYRWMCLRR (241 aa)). The interval 77-101 (LPANPPPASTNRQTGRQPTPLSPPL) is disordered. Residues 85–95 (STNRQTGRQPT) show a composition bias toward polar residues. A pre-S2 region spans residues 109 to 163 (MQWNSTTFHQTLQDPRVRGLYFPAGGSSSGTVNPVPTTASPISSIFSRIGDPALN). The chain crosses the membrane as a helical span at residues 171-191 (LLGPLLVLQAGFFLLTRILTI). Residues 192–242 (PQSLDSWWTSLNFLGGTTVCLGQNSQSPTSNHSPTSCPPTCPGYRWMCLRR) are Intravirion; in external conformation-facing. A helical membrane pass occupies residues 243-263 (FIIFLFILLLCLIFLLVLLDY). At 264-337 (QGMLPVCPLI…WASARFSWLS (74 aa)) the chain is on the virion surface side. N-linked (GlcNAc...) asparagine; by host glycosylation occurs at asparagine 309. The helical transmembrane segment at 338–358 (LLVPFVQWFVGLSPTVWLSVI) threads the bilayer. Topologically, residues 359-364 (WMMWYW) are intravirion. A helical transmembrane segment spans residues 365–387 (GPSLYRILSPFLPLLPIFFCLWV). Over 388–389 (YI) the chain is Virion surface.

It belongs to the orthohepadnavirus major surface antigen family. In terms of assembly, in its internal form (Li-HBsAg), interacts with the capsid protein and with the isoform S. Interacts with host chaperone CANX. Associates with host chaperone CANX through its pre-S2 N glycan; this association may be essential for isoform M proper secretion. As to quaternary structure, interacts with isoform L. Interacts with the antigens of satellite virus HDV (HDVAgs); this interaction is required for encapsidation of HDV genomic RNA. In terms of processing, isoform M is N-terminally acetylated by host at a ratio of 90%, and N-glycosylated by host at the pre-S2 region. Myristoylated.

The protein resides in the virion membrane. The large envelope protein exists in two topological conformations, one which is termed 'external' or Le-HBsAg and the other 'internal' or Li-HBsAg. In its external conformation the protein attaches the virus to cell receptors and thereby initiating infection. This interaction determines the species specificity and liver tropism. This attachment induces virion internalization predominantly through caveolin-mediated endocytosis. The large envelope protein also assures fusion between virion membrane and endosomal membrane. In its internal conformation the protein plays a role in virion morphogenesis and mediates the contact with the nucleocapsid like a matrix protein. In terms of biological role, the middle envelope protein plays an important role in the budding of the virion. It is involved in the induction of budding in a nucleocapsid independent way. In this process the majority of envelope proteins bud to form subviral lipoprotein particles of 22 nm of diameter that do not contain a nucleocapsid. In Hepatitis B virus genotype D (isolate Germany/1-91/1991) (HBV-D), this protein is Large envelope protein.